We begin with the raw amino-acid sequence, 1127 residues long: Genome polyprotein (1127 aa).

The tract at residues methionine 1–methionine 15 is interaction with host EXOC1. The Cytoplasmic segment spans residues methionine 1 to threonine 101. The interval methionine 37–isoleucine 72 is hydrophobic; homodimerization of capsid protein C. The propeptide at threonine 101–alanine 114 is ER anchor for the capsid protein C, removed in mature form by serine protease NS3. A helical transmembrane segment spans residues alanine 102 to glycine 122. The Extracellular portion of the chain corresponds to glutamate 123 to glutamate 238. Asparagine 183 carries N-linked (GlcNAc...) asparagine; by host glycosylation. A helical transmembrane segment spans residues threonine 239–glycine 259. At threonine 260 to arginine 265 the chain is on the cytoplasmic side. The chain crosses the membrane as a helical span at residues glycine 266–threonine 280. At methionine 281–glycine 725 the chain is on the extracellular side. Disulfide bonds link cysteine 283–cysteine 310, cysteine 340–cysteine 401, cysteine 354–cysteine 385, and cysteine 372–cysteine 396. An N-linked (GlcNAc...) asparagine; by host glycan is attached at asparagine 347. Residues aspartate 378–glycine 391 form a fusion peptide region. Asparagine 433 is a glycosylation site (N-linked (GlcNAc...) asparagine; by host). 2 disulfides stabilise this stretch: cysteine 465–cysteine 565 and cysteine 582–cysteine 613. Residues alanine 726–isoleucine 746 traverse the membrane as a helical segment. The Cytoplasmic segment spans residues glycine 747–serine 754. The helical transmembrane segment at leucine 755 to valine 773 threads the bilayer. Over glutamine 774 to alanine 1127 the chain is Extracellular. Cystine bridges form between cysteine 779–cysteine 790, cysteine 830–cysteine 918, cysteine 954–cysteine 998, cysteine 1055–cysteine 1104, and cysteine 1066–cysteine 1088. Asparagine 905 and asparagine 982 each carry an N-linked (GlcNAc...) asparagine; by host glycan.

As to quaternary structure, homodimer. Interacts (via N-terminus) with host EXOC1 (via C-terminus); this interaction results in EXOC1 degradation through the proteasome degradation pathway. Forms heterodimers with envelope protein E in the endoplasmic reticulum and Golgi. In terms of assembly, homodimer; in the endoplasmic reticulum and Golgi. Interacts with protein prM. Interacts with non-structural protein 1. As to quaternary structure, homodimer; Homohexamer when secreted. Interacts with envelope protein E. In terms of processing, specific enzymatic cleavages in vivo yield mature proteins. Cleavages in the lumen of endoplasmic reticulum are performed by host signal peptidase, wereas cleavages in the cytoplasmic side are performed by the Serine protease NS3. Signal cleavage at the 2K-4B site requires a prior NS3 protease-mediated cleavage at the 4A-2K site. Cleaved in post-Golgi vesicles by a host furin, releasing the mature small envelope protein M, and peptide pr. This cleavage is incomplete as up to 30% of viral particles still carry uncleaved prM. Post-translationally, N-glycosylated. In terms of processing, N-glycosylated. The excreted form is glycosylated and this is required for efficient secretion of the protein from infected cells.

Its subcellular location is the virion. It localises to the host nucleus. The protein localises to the host cytoplasm. The protein resides in the host perinuclear region. It is found in the secreted. Its subcellular location is the virion membrane. It localises to the host endoplasmic reticulum membrane. In terms of biological role, plays a role in virus budding by binding to the cell membrane and gathering the viral RNA into a nucleocapsid that forms the core of a mature virus particle. During virus entry, may induce genome penetration into the host cytoplasm after hemifusion induced by the surface proteins. Can migrate to the cell nucleus where it modulates host functions. Overcomes the anti-viral effects of host EXOC1 by sequestering and degrading the latter through the proteasome degradation pathway. Functionally, inhibits RNA silencing by interfering with host Dicer. Prevents premature fusion activity of envelope proteins in trans-Golgi by binding to envelope protein E at pH6.0. After virion release in extracellular space, gets dissociated from E dimers. Its function is as follows. Acts as a chaperone for envelope protein E during intracellular virion assembly by masking and inactivating envelope protein E fusion peptide. prM is the only viral peptide matured by host furin in the trans-Golgi network probably to avoid catastrophic activation of the viral fusion activity in acidic GolGi compartment prior to virion release. prM-E cleavage is inefficient, and many virions are only partially matured. These uncleaved prM would play a role in immune evasion. In terms of biological role, may play a role in virus budding. Exerts cytotoxic effects by activating a mitochondrial apoptotic pathway through M ectodomain. May display a viroporin activity. Functionally, binds to host cell surface receptor and mediates fusion between viral and cellular membranes. Envelope protein is synthesized in the endoplasmic reticulum in the form of heterodimer with protein prM. They play a role in virion budding in the ER, and the newly formed immature particle is covered with 60 spikes composed of heterodimer between precursor prM and envelope protein E. The virion is transported to the Golgi apparatus where the low pH causes dissociation of PrM-E heterodimers and formation of E homodimers. prM-E cleavage is inefficient, and many virions are only partially matured. These uncleaved prM would play a role in immune evasion. Involved in immune evasion, pathogenesis and viral replication. Once cleaved off the polyprotein, is targeted to three destinations: the viral replication cycle, the plasma membrane and the extracellular compartment. Essential for viral replication. Required for formation of the replication complex and recruitment of other non-structural proteins to the ER-derived membrane structures. Excreted as a hexameric lipoparticle that plays a role against host immune response. Antagonizing the complement function. Binds to the host macrophages and dendritic cells. Inhibits signal transduction originating from Toll-like receptor 3 (TLR3). Its function is as follows. Disrupts the host endothelial glycocalyx layer of host pulmonary microvascular endothelial cells, inducing degradation of sialic acid and shedding of heparan sulfate proteoglycans. NS1 induces expression of sialidases, heparanase, and activates cathepsin L, which activates heparanase via enzymatic cleavage. These effects are probably linked to the endothelial hyperpermeability observed in severe dengue disease. The protein is Genome polyprotein of Dengue virus type 2 (strain China/D2-04) (DENV-2).